A 149-amino-acid chain; its full sequence is UPF0179 protein TON_1048 (149 aa).

The protein belongs to the UPF0179 family.

This chain is UPF0179 protein TON_1048, found in Thermococcus onnurineus (strain NA1).